The primary structure comprises 356 residues: DNA polymerase IV (356 aa).

One can recognise a UmuC domain in the interval 6 to 187 (IIHIDMDYFF…LDIGDFPGVG (182 aa)). The Mg(2+) site is built by aspartate 10 and aspartate 105. Glutamate 106 is a catalytic residue.

Belongs to the DNA polymerase type-Y family. As to quaternary structure, monomer. Mg(2+) is required as a cofactor.

The protein resides in the cytoplasm. It carries out the reaction DNA(n) + a 2'-deoxyribonucleoside 5'-triphosphate = DNA(n+1) + diphosphate. Poorly processive, error-prone DNA polymerase involved in untargeted mutagenesis. Copies undamaged DNA at stalled replication forks, which arise in vivo from mismatched or misaligned primer ends. These misaligned primers can be extended by PolIV. Exhibits no 3'-5' exonuclease (proofreading) activity. May be involved in translesional synthesis, in conjunction with the beta clamp from PolIII. The sequence is that of DNA polymerase IV from Staphylococcus aureus (strain MRSA252).